We begin with the raw amino-acid sequence, 147 residues long: MALRNIRKYGDSVLRKKCREVEKIDERLVTLIKDMLETMYDADGVGLAAPQVGILKRLFIVDIGDGPLVFINPEILDTDGKQVDEEGCLSLPGKTEPVMRPNYVKARALNEKGEEFEIEAEELLARAILHEYDHLNGTLFIDRTTKK.

Fe cation-binding residues include cysteine 88 and histidine 130. The active site involves glutamate 131. Residue histidine 134 coordinates Fe cation.

The protein belongs to the polypeptide deformylase family. Fe(2+) serves as cofactor.

The enzyme catalyses N-terminal N-formyl-L-methionyl-[peptide] + H2O = N-terminal L-methionyl-[peptide] + formate. In terms of biological role, removes the formyl group from the N-terminal Met of newly synthesized proteins. Requires at least a dipeptide for an efficient rate of reaction. N-terminal L-methionine is a prerequisite for activity but the enzyme has broad specificity at other positions. The protein is Peptide deformylase of Clostridium botulinum (strain Alaska E43 / Type E3).